The sequence spans 441 residues: MTNTPAPRARRSVLSRGSWSETARIAGILRKETVGGAVLLVASAVALVWANSPWAESYFALRDLKIGAEPFGLHLNLTLGTWAADGLLAVFFLVVGLELKREFVAGDLRDPARAALPMAAAVGGMVVPALIFVAVTAPVGDGATRGWAIPTATDIAFAVAVLAVISTHLPAALRTFLLTLAVVDDLLAVTVIAVFYTDEINLTALGLSIVPLALFALCVQRRIRSWWLLLPLGVATWVLMHESGVHATVAGVLLGFTVPVLRSVAAGGPEAGPGLAEHFEHRLRPLSAGVAVPVFAFFAAGVAIGGVSGLTRALSDPITLGIILGLVVGKPVGIFLTTRVLTAVTRANLDDALRWIDVFGVALLAGIGFTVSLLIGDLAYGLGSDRDDFVKVGVLTGSLVAALIAAVLLRVRNRHYRAVWLQETADTDRDGVPDVYQSQRD.

12 helical membrane passes run 34-54, 77-97, 115-135, 146-166, 176-196, 199-219, 225-245, 249-269, 290-310, 317-337, 355-375, and 389-409; these read VGGA…NSPW, LTLG…VVGL, ALPM…FVAV, GWAI…AVIS, FLLT…AVFY, EINL…ALCV, SWWL…ESGV, VAGV…AGGP, VAVP…VSGL, PITL…IFLT, WIDV…SLLI, and FVKV…AVLL.

It belongs to the NhaA Na(+)/H(+) (TC 2.A.33) antiporter family.

It localises to the cell membrane. The catalysed reaction is Na(+)(in) + 2 H(+)(out) = Na(+)(out) + 2 H(+)(in). Its function is as follows. Na(+)/H(+) antiporter that extrudes sodium in exchange for external protons. This is Na(+)/H(+) antiporter NhaA 2 from Mycobacterium sp. (strain MCS).